A 254-amino-acid polypeptide reads, in one-letter code: 5'-nucleotidase SurE (254 aa).

4 residues coordinate a divalent metal cation: D8, D9, S38, and N91.

Belongs to the SurE nucleotidase family. Requires a divalent metal cation as cofactor.

Its subcellular location is the cytoplasm. It catalyses the reaction a ribonucleoside 5'-phosphate + H2O = a ribonucleoside + phosphate. Nucleotidase that shows phosphatase activity on nucleoside 5'-monophosphates. The protein is 5'-nucleotidase SurE of Anaeromyxobacter sp. (strain Fw109-5).